A 112-amino-acid polypeptide reads, in one-letter code: Protein lin-52 homolog (112 aa).

Belongs to the lin-52 family. As to quaternary structure, component of the DREAM complex.

The polypeptide is Protein lin-52 homolog (lin52) (Danio rerio (Zebrafish)).